A 291-amino-acid chain; its full sequence is Glucose and ribitol dehydrogenase (291 aa).

Residues 1–35 form a disordered region; sequence MASGGQFPPQKQESQPGKEHLMDPSPQHASPHYKP. 45–69 contacts NAD(+); that stretch reads LVTGGDSGIGRSVCYHFALEGATVA. Ser-183 contributes to the substrate binding site. Catalysis depends on Tyr-196, which acts as the Proton acceptor.

This sequence belongs to the short-chain dehydrogenases/reductases (SDR) family. In terms of tissue distribution, expressed in embryogenic cells, somatic embryos and seeds in the later stages of development, but not in non-embryogenic cells and mature leaves.

In terms of biological role, may act as a short alcohol-polyol-sugar dehydrogenase possibly related to carbohydrate metabolism and the acquisition of desiccation tolerance. May also be involved in signal transduction. In Daucus carota (Wild carrot), this protein is Glucose and ribitol dehydrogenase (CAISE5).